The following is a 458-amino-acid chain: UDP-N-acetylmuramate--L-alanine ligase (458 aa).

112-118 contacts ATP; sequence GMHGKTT.

It belongs to the MurCDEF family.

The protein resides in the cytoplasm. The enzyme catalyses UDP-N-acetyl-alpha-D-muramate + L-alanine + ATP = UDP-N-acetyl-alpha-D-muramoyl-L-alanine + ADP + phosphate + H(+). It participates in cell wall biogenesis; peptidoglycan biosynthesis. Its function is as follows. Cell wall formation. This Acidobacterium capsulatum (strain ATCC 51196 / DSM 11244 / BCRC 80197 / JCM 7670 / NBRC 15755 / NCIMB 13165 / 161) protein is UDP-N-acetylmuramate--L-alanine ligase.